The following is a 337-amino-acid chain: Deoxyhypusine hydroxylase (337 aa).

2 HEAT-like PBS-type repeats span residues 73–99 (LKHE…VLSD) and 106–132 (CRHE…YRDR). The Fe cation site is built by histidine 75, glutamate 76, histidine 108, and glutamate 109. Residues 156–165 (AERQKEKLRP) are compositionally biased toward basic and acidic residues. The interval 156–183 (AERQKEKLRPSDFASIDPAPPMPESDKE) is disordered. 3 HEAT-like PBS-type repeats span residues 202 to 235 (SRYR…GLSD), 240 to 266 (FRHE…ALSN), and 273 to 300 (VRHE…FLHD). Residues histidine 242, glutamate 243, histidine 275, and glutamate 276 each contribute to the Fe cation site.

This sequence belongs to the deoxyhypusine hydroxylase family. Fe(2+) is required as a cofactor.

The protein resides in the cytoplasm. Its subcellular location is the nucleus. The enzyme catalyses [eIF5A protein]-deoxyhypusine + AH2 + O2 = [eIF5A protein]-hypusine + A + H2O. Its pathway is protein modification; eIF5A hypusination. Catalyzes the hydroxylation of the N(6)-(4-aminobutyl)-L-lysine intermediate to form hypusine, an essential post-translational modification only found in mature eIF-5A factor. The protein is Deoxyhypusine hydroxylase of Gibberella zeae (strain ATCC MYA-4620 / CBS 123657 / FGSC 9075 / NRRL 31084 / PH-1) (Wheat head blight fungus).